Here is a 143-residue protein sequence, read N- to C-terminus: MGKNHFLKDFSALPEDVLIENERGITLLGYPLFSPKILLPHVDPPQFQRLNTENGSLIALSKNTISNFIELYPIDLSTERTAGSSSSQMTKWFVLMDYKEKYDIDDQGWCYSWNFNNSRWKSKNGLVRRRVWVRLPTTSHGLD.

This sequence belongs to the SPO73 family. Interacts with SPO71.

It is found in the cytoplasm. It localises to the prospore membrane. Functionally, required for spore wall assembly and ascus formation. Involved in the formation and elongation of prospore membranes. The polypeptide is Sporulation-specific protein 73 (Saccharomyces cerevisiae (strain ATCC 204508 / S288c) (Baker's yeast)).